We begin with the raw amino-acid sequence, 242 residues long: Putative serine/threonine-protein kinase (242 aa).

The Protein kinase domain occupies 49 to 242; sequence FSSKNKVGEG…KSDVYSFGVL (194 aa). Residues 55–63 and Lys-77 each bind ATP; that span reads VGEGGCGAV. Asp-177 (proton acceptor) is an active-site residue.

This sequence belongs to the protein kinase superfamily. Ser/Thr protein kinase family.

The catalysed reaction is L-seryl-[protein] + ATP = O-phospho-L-seryl-[protein] + ADP + H(+). The enzyme catalyses L-threonyl-[protein] + ATP = O-phospho-L-threonyl-[protein] + ADP + H(+). The polypeptide is Putative serine/threonine-protein kinase (Helianthus annuus (Common sunflower)).